A 555-amino-acid polypeptide reads, in one-letter code: Sulfite reductase [NADPH] hemoprotein beta-component (555 aa).

[4Fe-4S] cluster-binding residues include Cys-430, Cys-436, Cys-475, and Cys-479. Residue Cys-479 coordinates siroheme.

Belongs to the nitrite and sulfite reductase 4Fe-4S domain family. Alpha(8)-beta(8). The alpha component is a flavoprotein, the beta component is a hemoprotein. The cofactor is siroheme. It depends on [4Fe-4S] cluster as a cofactor.

It catalyses the reaction hydrogen sulfide + 3 NADP(+) + 3 H2O = sulfite + 3 NADPH + 4 H(+). The protein operates within sulfur metabolism; hydrogen sulfide biosynthesis; hydrogen sulfide from sulfite (NADPH route): step 1/1. Functionally, component of the sulfite reductase complex that catalyzes the 6-electron reduction of sulfite to sulfide. This is one of several activities required for the biosynthesis of L-cysteine from sulfate. The chain is Sulfite reductase [NADPH] hemoprotein beta-component from Leptospira biflexa serovar Patoc (strain Patoc 1 / Ames).